A 1071-amino-acid chain; its full sequence is ATP-dependent helicase/deoxyribonuclease subunit B (1071 aa).

This sequence belongs to the helicase family. AddB/RexB type 2 subfamily. In terms of assembly, heterodimer of AddA and RexB. Requires Mg(2+) as cofactor.

In terms of biological role, the heterodimer acts as both an ATP-dependent DNA helicase and an ATP-dependent, dual-direction single-stranded exonuclease. Recognizes the chi site generating a DNA molecule suitable for the initiation of homologous recombination. This subunit has 5' -&gt; 3' nuclease activity but not helicase activity. This chain is ATP-dependent helicase/deoxyribonuclease subunit B, found in Streptococcus pyogenes serotype M18 (strain MGAS8232).